The sequence spans 502 residues: Cytochrome P450 71A8 (502 aa).

Residues 16 to 36 (IISHTLAFQALVSLILLISIT) form a helical membrane-spanning segment. Residues 93-119 (PVSSRRRPRGNHENSRSRLRRPRGSRS) form a disordered region. C447 contacts heme.

Belongs to the cytochrome P450 family. Heme serves as cofactor.

It localises to the membrane. The polypeptide is Cytochrome P450 71A8 (CYP71A8) (Mentha piperita (Peppermint)).